A 359-amino-acid chain; its full sequence is Probable dual-specificity RNA methyltransferase RlmN (359 aa).

E100 serves as the catalytic Proton acceptor. Residues 106–340 form the Radical SAM core domain; it reads TDKRLTVCVS…VSVRASRGRD (235 aa). A disulfide bridge links C113 with C345. [4Fe-4S] cluster-binding residues include C120, C124, and C127. S-adenosyl-L-methionine-binding positions include 167–168, S197, 226–228, and N302; these read GE and SLH. C345 (S-methylcysteine intermediate) is an active-site residue.

This sequence belongs to the radical SAM superfamily. RlmN family. [4Fe-4S] cluster is required as a cofactor.

The protein resides in the cytoplasm. It catalyses the reaction adenosine(2503) in 23S rRNA + 2 reduced [2Fe-2S]-[ferredoxin] + 2 S-adenosyl-L-methionine = 2-methyladenosine(2503) in 23S rRNA + 5'-deoxyadenosine + L-methionine + 2 oxidized [2Fe-2S]-[ferredoxin] + S-adenosyl-L-homocysteine. The catalysed reaction is adenosine(37) in tRNA + 2 reduced [2Fe-2S]-[ferredoxin] + 2 S-adenosyl-L-methionine = 2-methyladenosine(37) in tRNA + 5'-deoxyadenosine + L-methionine + 2 oxidized [2Fe-2S]-[ferredoxin] + S-adenosyl-L-homocysteine. Its function is as follows. Specifically methylates position 2 of adenine 2503 in 23S rRNA and position 2 of adenine 37 in tRNAs. This is Probable dual-specificity RNA methyltransferase RlmN from Prochlorococcus marinus (strain NATL1A).